The following is a 211-amino-acid chain: Recombination protein RecR (211 aa).

A C4-type zinc finger spans residues 70–85; sequence CRECFLITDREVCPIC. The region spanning 93–190 is the Toprim domain; sequence KFICVVEESQ…KITRTAYGFQ (98 aa).

This sequence belongs to the RecR family.

May play a role in DNA repair. It seems to be involved in an RecBC-independent recombinational process of DNA repair. It may act with RecF and RecO. This Aquifex aeolicus (strain VF5) protein is Recombination protein RecR.